Reading from the N-terminus, the 166-residue chain is Large ribosomal subunit protein uL10 (166 aa).

Belongs to the universal ribosomal protein uL10 family. As to quaternary structure, part of the ribosomal stalk of the 50S ribosomal subunit. The N-terminus interacts with L11 and the large rRNA to form the base of the stalk. The C-terminus forms an elongated spine to which L12 dimers bind in a sequential fashion forming a multimeric L10(L12)X complex.

Its function is as follows. Forms part of the ribosomal stalk, playing a central role in the interaction of the ribosome with GTP-bound translation factors. The polypeptide is Large ribosomal subunit protein uL10 (Pseudomonas fluorescens (strain SBW25)).